A 273-amino-acid chain; its full sequence is Pyridoxal phosphate homeostasis protein (273 aa).

Phosphoserine is present on S6. The residue at position 47 (K47) is an N6-(pyridoxal phosphate)lysine. Y69 carries the post-translational modification Phosphotyrosine. At K125 the chain carries N6-succinyllysine. Residues S226 and S244 each carry the phosphoserine modification. A compositionally biased stretch (basic and acidic residues) spans 251–260; sequence DYSKKTDKPA. The segment at 251 to 273 is disordered; that stretch reads DYSKKTDKPAAELQAPEEVAQAH.

This sequence belongs to the pyridoxal phosphate-binding protein YggS/PROSC family.

In terms of biological role, pyridoxal 5'-phosphate (PLP)-binding protein, which may be involved in intracellular homeostatic regulation of pyridoxal 5'-phosphate (PLP), the active form of vitamin B6. In Bos taurus (Bovine), this protein is Pyridoxal phosphate homeostasis protein.